The sequence spans 253 residues: Thiamine import ATP-binding protein ThiQ (253 aa).

Residues 8-236 (VRLDKVSFSY…AGPEAFRRYI (229 aa)) enclose the ABC transporter domain. 38 to 45 (GPSGSGKS) lines the ATP pocket.

It belongs to the ABC transporter superfamily. Thiamine importer (TC 3.A.1.19.1) family. As to quaternary structure, the complex is composed of two ATP-binding proteins (ThiQ), two transmembrane proteins (ThiP) and a solute-binding protein (ThiB).

The protein resides in the cell inner membrane. It carries out the reaction thiamine(out) + ATP + H2O = thiamine(in) + ADP + phosphate + H(+). Functionally, part of the ABC transporter complex ThiBPQ involved in thiamine import. Responsible for energy coupling to the transport system. The chain is Thiamine import ATP-binding protein ThiQ from Mesorhizobium japonicum (strain LMG 29417 / CECT 9101 / MAFF 303099) (Mesorhizobium loti (strain MAFF 303099)).